Consider the following 166-residue polypeptide: Endoribonuclease YbeY (166 aa).

Zn(2+)-binding residues include histidine 132, histidine 136, and histidine 142.

Belongs to the endoribonuclease YbeY family. Requires Zn(2+) as cofactor.

It localises to the cytoplasm. Its function is as follows. Single strand-specific metallo-endoribonuclease involved in late-stage 70S ribosome quality control and in maturation of the 3' terminus of the 16S rRNA. This Clostridium botulinum (strain Alaska E43 / Type E3) protein is Endoribonuclease YbeY.